Reading from the N-terminus, the 477-residue chain is RNA pseudouridine synthase 6, chloroplastic (477 aa).

The N-terminal 52 residues, 1–52 (MPKAAASLASLLPQLWHRPVQPPPFLHRALSSSSPLLRRHRAALHSPAAPLS), are a transit peptide targeting the chloroplast. One can recognise an S4 RNA-binding domain in the interval 98–205 (EVAVDFISRS…FPRCYEIDWK (108 aa)). The active site involves D258.

The protein belongs to the pseudouridine synthase RluA family.

The protein resides in the plastid. It localises to the chloroplast. It catalyses the reaction a uridine in RNA = a pseudouridine in RNA. This chain is RNA pseudouridine synthase 6, chloroplastic, found in Oryza sativa subsp. japonica (Rice).